Here is a 376-residue protein sequence, read N- to C-terminus: MEQDLRSIPASKLDKFIENHLPDTSFCADLREVIDALCALLKDRSFRGPVRRMRASKGVKGKGTTLKGRSDADLVVFLNNLTSFEDQLNQQGVLIKEIKKQLCEVQHERRCGVKFEVHSLRSPNSRALSFKLSAPDLLKEVKFDVLPAYDLLDHLNILKKPNQQFYANLISGRTPPGKEGKLSICFMGLRKYFLNCRPTKLKRLIRLVTHWYQLCKEKLGDPLPPQYALELLTVYAWEYGSRVTKFNTAQGFRTVLELVTKYKQLQIYWTVYYDFRHQEVSEYLHQQLKKDRPVILDPADPTRNIAGLNPKDWRRLAGEAAAWLQYPCFKYRDGSSVCSWEVPTEVGVPMKYLLCRIFWLLFWSLFHFIFGKTSSG.

Residues Met1–Lys351 are Cytoplasmic-facing. A helical; Anchor for type IV membrane protein membrane pass occupies residues Tyr352–Phe370. Residues Gly371–Gly376 lie on the Extracellular side of the membrane.

This sequence belongs to the 2-5A synthase family. Interacts with OSBPL1A and ABCF3. Highly expressed in lung, spleen and thymus. Also detected at lower levels in heart, kidney, liver, lung, skeletal muscle, testes, uterus and ovaries.

It localises to the endoplasmic reticulum membrane. Its function is as follows. Does not have 2'-5'-OAS activity, but can bind double-stranded RNA. The full-length protein displays antiviral activity against flaviviruses such as west Nile virus (WNV) via an alternative antiviral pathway independent of RNase L. The truncated form of the protein lacks antiviral activity. The protein is Inactive 2'-5'-oligoadenylate synthase 1B (Oas1b) of Mus musculus (Mouse).